Consider the following 1049-residue polypeptide: Protein phosphatase 1 regulatory subunit 12A (1049 aa).

ANK repeat units lie at residues Asp39 to Tyr68, Asp72 to Gln101, Glu105 to Val134, Glu138 to Val164, Ser198 to Ile227, and Asp231 to Val260. The interval Leu302–Asp947 is disordered. Residues Ile303–Val315 show a composition bias toward polar residues. Over residues Lys319–Glu341 the composition is skewed to basic and acidic residues. Residues Ser359–Asn371 are compositionally biased toward acidic residues. Residues Ser378–Pro421 show a composition bias toward low complexity. The segment covering Ser426–Ser436 has biased composition (basic and acidic residues). The segment covering Arg473–Leu484 has biased composition (low complexity). The segment covering Asp485 to Arg497 has biased composition (basic and acidic residues). Positions Ser545–Thr564 are enriched in polar residues. Low complexity predominate over residues Ser571 to Lys592. Over residues Ala593–Arg607 the composition is skewed to polar residues. Residues Ser620–Thr639 show a composition bias toward low complexity. Residues Trp649 to Ser664 are compositionally biased toward basic and acidic residues. Low complexity predominate over residues Ala665–Val686. Basic and acidic residues predominate over residues Val702 to Arg711. A compositionally biased stretch (basic residues) spans Lys712 to Arg722. The segment covering Arg747–Arg789 has biased composition (basic and acidic residues). Low complexity predominate over residues Thr790–Leu819. Residues Asn820 to Thr829 show a composition bias toward polar residues. Positions Ser835–Ile863 are enriched in basic and acidic residues. The segment covering Arg864–Ser875 has biased composition (basic residues). Composition is skewed to basic and acidic residues over residues Pro890–Ser906 and Gly934–Asp947.

As to quaternary structure, PP1 comprises a catalytic subunit, and one or several targeting or regulatory subunits. Ppp1r12a mediates binding to myosin.

It localises to the cytoplasm. Its function is as follows. Regulates myosin phosphatase activity. This chain is Protein phosphatase 1 regulatory subunit 12A (ppp1r12a), found in Danio rerio (Zebrafish).